A 557-amino-acid polypeptide reads, in one-letter code: MNTEMIYDAKWPEEFAERLKNDGPWANWELYKLSAEIQKTLAIPEFEGLRAPLYLPSFTPLPHQLEVAQKVVEKMNGKAILADEVGLGKTVEAGLILKEYMIRGLAKKILILVPASLVSQWVKELQEKFLIPAVEQKKSYVWEQCDIVVSSIDTAKRSPHREIVLSIPYDLVIIDEAHKLKNSKTKNYEFVRNLVKKYCLLLTATPIQNRIEEIFNLVSLLKPGHLGSQNHFQEEFAKKKSSLEAHEHLKDLVNKVMIRNRRHDTGLNWKQRHVETVPIQFSPSEQALYDEISRLKDSINKPASMFSIMTLQRECCSSREAVYMTLKKMLDQKEKQAPAIDEDTISVLIDRINQVTQNSKALQVVDLIKKIDDKVIIFTEYRATQIYLQWFLQQNGISSVPFRGGFKRGKKDWMKDLFRGKIQVLIATEAGGEGINLQFCNHMINYDLPWNPMRLEQRIGRIHRLGQERDVHIYNMATKHTVEEHILKLLYEKIHLFEKVVGELDDILTKIQVNNFEEHLHDILYHSATEEEMKIKMDNLTSFLSYKKQLPAEKRGS.

A Helicase ATP-binding domain is found at 70–224 (KVVEKMNGKA…FNLVSLLKPG (155 aa)). 82 to 90 (ADEVGLGKT) lines the ATP pocket. The short motif at 175–178 (DEAH) is the DEAH box element. Residues 363–524 (QVVDLIKKID…NFEEHLHDIL (162 aa)) enclose the Helicase C-terminal domain.

Belongs to the SNF2/RAD54 helicase family.

This is an uncharacterized protein from Bacillus subtilis (strain 168).